Reading from the N-terminus, the 453-residue chain is Exodeoxyribonuclease 7 large subunit (453 aa).

This sequence belongs to the XseA family. Heterooligomer composed of large and small subunits.

Its subcellular location is the cytoplasm. The enzyme catalyses Exonucleolytic cleavage in either 5'- to 3'- or 3'- to 5'-direction to yield nucleoside 5'-phosphates.. Functionally, bidirectionally degrades single-stranded DNA into large acid-insoluble oligonucleotides, which are then degraded further into small acid-soluble oligonucleotides. The sequence is that of Exodeoxyribonuclease 7 large subunit from Geobacter metallireducens (strain ATCC 53774 / DSM 7210 / GS-15).